The sequence spans 254 residues: GTP cyclohydrolase III (254 aa).

This sequence belongs to the archaeal-type GTP cyclohydrolase family.

It catalyses the reaction GTP + 3 H2O = 2-amino-5-formylamino-6-(5-phospho-D-ribosylamino)pyrimidin-4(3H)-one + 2 phosphate + 2 H(+). Functionally, catalyzes the formation of 2-amino-5-formylamino-6-ribofuranosylamino-4(3H)-pyrimidinone ribonucleotide monophosphate and inorganic phosphate from GTP. Also has an independent pyrophosphate phosphohydrolase activity. The chain is GTP cyclohydrolase III from Methanobrevibacter smithii (strain ATCC 35061 / DSM 861 / OCM 144 / PS).